Reading from the N-terminus, the 94-residue chain is Defensin-like protein 21 (94 aa).

A signal peptide spans 1–26 (MVRTNVVSFVLFAAIVLCIGSIQIDG). 4 disulfide bridges follow: Cys41–Cys92, Cys51–Cys79, Cys65–Cys88, and Cys69–Cys90.

This sequence belongs to the DEFL family.

It is found in the secreted. The chain is Defensin-like protein 21 from Arabidopsis thaliana (Mouse-ear cress).